The sequence spans 349 residues: N-acetyltaurine hydrolase (349 aa).

Residues histidine 26, histidine 28, glutamate 169, histidine 201, histidine 230, and aspartate 298 each contribute to the a divalent metal cation site.

The protein belongs to the metallo-dependent hydrolases superfamily. Phosphotriesterase family. Requires a divalent metal cation as cofactor.

It localises to the cytoplasm. It is found in the cytosol. The enzyme catalyses N-acetyltaurine + H2O = taurine + acetate. It carries out the reaction N-propanoyltaurine + H2O = propanoate + taurine. It catalyses the reaction N-acetyl-L-methionine + H2O = L-methionine + acetate. The catalysed reaction is N-acetyl-L-isoleucine + H2O = L-isoleucine + acetate. The enzyme catalyses N-acetyl-L-leucine + H2O = L-leucine + acetate. It carries out the reaction N-acetyl-L-valine + H2O = L-valine + acetate. N-acetyltaurine hydrolase that catalyzes the hydrolysis of N-acetyltaurine into taurine and acetate. PTER also acts on other N-acetyl amino acids (Met, Ile, Leu, Val) and N-propionyltaurine, but at lower rates. In Danio rerio (Zebrafish), this protein is N-acetyltaurine hydrolase (pter).